An 86-amino-acid chain; its full sequence is Arminin 7246 (86 aa).

The signal sequence occupies residues 1 to 18; the sequence is MRPEYAVLFLALIALTYA. The propeptide occupies 19–57; it reads RSNEDVREEIKNEIEKDILEDLVEDEGELDDKAIDVNDA. Ala83 carries the alanine amide modification.

This sequence belongs to the arminin family. Expressed in entodermal epithelium along the body column.

The protein resides in the secreted. The protein localises to the target cell membrane. Its function is as follows. Antimicrobial peptide with a broad-spectrum antimicrobial activity. Keeps its antibacterial activity under a wide range of salt concentrations that mimic physiological conditions of human blood, which is surprising, since Hydra is an obligate freshwater animal with nearly no salt tolerance. Does not affect red blood cells. This chain is Arminin 7246, found in Hydra viridissima (Green hydra).